Consider the following 312-residue polypeptide: Formimidoylglutamase (312 aa).

Positions 123, 152, 154, 156, 243, and 245 each coordinate Mn(2+).

Belongs to the arginase family. The cofactor is Mn(2+).

It carries out the reaction N-formimidoyl-L-glutamate + H2O = formamide + L-glutamate. The protein operates within amino-acid degradation; L-histidine degradation into L-glutamate; L-glutamate from N-formimidoyl-L-glutamate (hydrolase route): step 1/1. Functionally, catalyzes the conversion of N-formimidoyl-L-glutamate to L-glutamate and formamide. This Pseudomonas fluorescens (strain ATCC BAA-477 / NRRL B-23932 / Pf-5) protein is Formimidoylglutamase.